The sequence spans 460 residues: MATGKIVQVIGAVVDVDFPQDAVPRVYDALEVQNGNEKLVLEVQQQLGGGIVRTIAMGSSDGLRRGLDVKDLEHPIEVPVGKATLGRIMNVLGEPVDMKGEIGEEERWAIHRAAPSYEELSNSQELLETGIKVIDLMCPFAKGGKVGLFGGAGVGKTVNMMELIRNIAIEHSGYSVFAGVGERTREGNDFYHEMTDSNVIDKVSLVYGQMNEPPGNRLRVALTGLTMAEKFRDEGRDVLLFVDNIYRYTLAGTEVSALLGRMPSAVGYQPTLAEEMGVLQERITSTKTGSITSVQAVYVPADDLTDPSPATTFAHLDATVVLSRQIASLGIYPAVDPLDSTSRQLDPLVVGQEHYDTARGVQSILQRYQELKDIIAILGMDELSEEDKLVVARARKIQRFLSQPFFVAEVFTGSPGKYVSLKDTIRGFKGIMEGEYDHLPEQAFYMVGSIDEAVEKAKKL.

150–157 (GGAGVGKT) is an ATP binding site.

Belongs to the ATPase alpha/beta chains family. In terms of assembly, F-type ATPases have 2 components, CF(1) - the catalytic core - and CF(0) - the membrane proton channel. CF(1) has five subunits: alpha(3), beta(3), gamma(1), delta(1), epsilon(1). CF(0) has three main subunits: a(1), b(2) and c(9-12). The alpha and beta chains form an alternating ring which encloses part of the gamma chain. CF(1) is attached to CF(0) by a central stalk formed by the gamma and epsilon chains, while a peripheral stalk is formed by the delta and b chains.

It is found in the cell inner membrane. The enzyme catalyses ATP + H2O + 4 H(+)(in) = ADP + phosphate + 5 H(+)(out). Its function is as follows. Produces ATP from ADP in the presence of a proton gradient across the membrane. The catalytic sites are hosted primarily by the beta subunits. The chain is ATP synthase subunit beta from Salmonella paratyphi A (strain ATCC 9150 / SARB42).